An 803-amino-acid polypeptide reads, in one-letter code: MANVSKKVSWSGRDRDDEEGAPLLRRTGQPDEETPLLNGAGPGARQSHSALFRIGQMNNVELDDELLDPEVDPPHTFPKEIPHNEKLLSLKYESLDYDNSENQLFLEEERRINHTAFRTVEIKRWVICALIGILTGLVACFIDIVVENLAGLKYRVIKDNIDKFTEKGGLSFSLLLWATLNSAFVLVGSVIVAFIEPVAAGSGIPQIKCFLNGVKIPHVVRLKTLVIKVSGVILSVVGGLAVGKEGPMIHSGSVIAAGISQGRSTSLKRDFKIFEYFRRDTEKRDFVSAGAAAGVSAAFGAPVGGVLFSLEEGASFWNQFLTWRIFFASMISTFTLNFVLSIYHGNMWDLSSPGLINFGRFDSEKMAYTIHEIPVFIAMGVVGGILGAVFNALNYWLTMFRIRYIHRPCLQVIEAMLVAAVTATVAFVLIYSSRDCQPLQGSSMSYPLQLFCADGEYNSMAAAFFNTPEKSVVSLFHDPPGSYNPMTLGLFTLVYFFLACWTYGLTVSAGVFIPSLLIGAAWGRLFGISLSYLTGAAIWADPGKYALMGAAAQLGGIVRMTLSLTVIMMEATSNVTYGFPIMLVLMTAKIVGDVFIEGLYDMHIQLQSVPFLHWEAPVTSHSLTAREVMSTPVTCLRRREKVGIIVDVLSDTASNHNGFPVVEDVGDTQPARLQGLILRSQLIVLLKHKVFVERSNMGLVQRRLRLKDFRDAYPRFPPIQSIHVSQDERECTMDLSEFMNPSPYTVPQEASLPRVFKLFRALGLRHLVVVDNHNQVVGLVTRKDLARYRLGKGGLEELSLAQT.

Residues 1 to 46 form a disordered region; the sequence is MANVSKKVSWSGRDRDDEEGAPLLRRTGQPDEETPLLNGAGPGARQ. Residues 1-124 lie on the Cytoplasmic side of the membrane; that stretch reads MANVSKKVSW…TAFRTVEIKR (124 aa). S9 carries the phosphoserine modification. Helical transmembrane passes span 125–157 and 172–195; these read WVIC…YRVI and FSLL…VAFI. A Selectivity filter part_1 motif is present at residues 201–205; it reads GSGIP. S202 provides a ligand contact to chloride. The helical intramembrane region spans 204–211; the sequence is IPQIKCFL. Transmembrane regions (helical) follow at residues 221-239 and 245-262; these read RLKT…VVGG and EGPM…ISQG. The Selectivity filter part_2 signature appears at 243 to 247; that stretch reads GKEGP. Intramembrane regions (helical) lie at residues 286–298 and 302–310; these read FVSA…VSAA and PVGGVLFSL. 5 consecutive transmembrane segments (helical) span residues 320–339, 373–403, 408–430, 485–505, and 510–533; these read FLTW…LNFV, IPVF…FRIR, PCLQ…FVLI, PMTL…TYGL, and GVFI…LSYL. The Selectivity filter part_3 signature appears at 510 to 514; the sequence is GVFIP. F512 provides a ligand contact to chloride. Residues 543 to 557 constitute an intramembrane region (helical); the sequence is GKYALMGAAAQLGGI. Positions 558–560 form an intramembrane region, note=Loop between two helices; it reads VRM. An intramembrane region (helical) is located at residues 561–572; the sequence is TLSLTVIMMEAT. Residues 573–576 constitute an intramembrane region (note=Loop between two helices); sequence SNVT. Residues 577-595 form a helical membrane-spanning segment; sequence YGFPIMLVLMTAKIVGDVF. Residues 596-803 lie on the Cytoplasmic side of the membrane; it reads IEGLYDMHIQ…GLEELSLAQT (208 aa). Y600 is a chloride binding site. CBS domains are found at residues 629-693 and 739-797; these read MSTP…VFVE and MNPS…GLEE. Residues 656 to 658 and 781 to 784 each bind ATP; these read HNG and TRKD. The residue at position 799 (S799) is a Phosphoserine.

The protein belongs to the chloride channel (TC 2.A.49) family. ClC-7/CLCN7 subfamily. In terms of assembly, chloride channel 7 are heteromers of alpha (CLCN7) and beta (OSTM1) subunits. In terms of tissue distribution, liver, spleen, kidneys and brain.

The protein resides in the lysosome membrane. It catalyses the reaction 2 chloride(in) + H(+)(out) = 2 chloride(out) + H(+)(in). Slowly voltage-gated channel mediating the exchange of chloride ions against protons. Functions as antiporter and contributes to the acidification of the lysosome lumen and may be involved in maintaining lysosomal pH. The CLC channel family contains both chloride channels and proton-coupled anion transporters that exchange chloride or another anion for protons. The presence of conserved gating glutamate residues is typical for family members that function as antiporters. The sequence is that of H(+)/Cl(-) exchange transporter 7 from Mus musculus (Mouse).